The following is a 123-amino-acid chain: WAP four-disulfide core domain protein 2 (123 aa).

A signal peptide spans 1–28 (MPASRLVPLGAVLLLGLLLLLELPPVTG). WAP domains lie at 30–71 (GADK…SAIC) and 74–122 (PNEK…VTPN). Cystine bridges form between cysteine 37–cysteine 63, cysteine 46–cysteine 67, cysteine 50–cysteine 62, cysteine 56–cysteine 71, cysteine 81–cysteine 109, cysteine 92–cysteine 113, cysteine 96–cysteine 108, and cysteine 102–cysteine 118. An N-linked (GlcNAc...) asparagine glycan is attached at asparagine 45.

In terms of assembly, homotrimer; disulfide-linked. Epididymis.

Its subcellular location is the secreted. Functionally, broad range protease inhibitor. The sequence is that of WAP four-disulfide core domain protein 2 (WFDC2) from Oryctolagus cuniculus (Rabbit).